The primary structure comprises 236 residues: 2-C-methyl-D-erythritol 4-phosphate cytidylyltransferase (236 aa).

This sequence belongs to the IspD/TarI cytidylyltransferase family. IspD subfamily. As to quaternary structure, homodimer.

It catalyses the reaction 2-C-methyl-D-erythritol 4-phosphate + CTP + H(+) = 4-CDP-2-C-methyl-D-erythritol + diphosphate. The protein operates within isoprenoid biosynthesis; isopentenyl diphosphate biosynthesis via DXP pathway; isopentenyl diphosphate from 1-deoxy-D-xylulose 5-phosphate: step 2/6. Its function is as follows. Catalyzes the formation of 4-diphosphocytidyl-2-C-methyl-D-erythritol from CTP and 2-C-methyl-D-erythritol 4-phosphate (MEP). The chain is 2-C-methyl-D-erythritol 4-phosphate cytidylyltransferase from Salmonella newport (strain SL254).